We begin with the raw amino-acid sequence, 392 residues long: S-adenosylmethionine synthase (392 aa).

His20 serves as a coordination point for ATP. Asp22 provides a ligand contact to Mg(2+). Glu48 is a K(+) binding site. Residues Glu61 and Gln106 each contribute to the L-methionine site. The interval 106–116 (QSRDIINAIEK) is flexible loop. ATP-binding positions include 171–173 (DSK), Asp248, 254–255 (RK), Ala271, and Lys275. L-methionine is bound at residue Asp248. L-methionine is bound at residue Lys279.

It belongs to the AdoMet synthase family. In terms of assembly, homotetramer; dimer of dimers. It depends on Mg(2+) as a cofactor. Requires K(+) as cofactor.

Its subcellular location is the cytoplasm. The catalysed reaction is L-methionine + ATP + H2O = S-adenosyl-L-methionine + phosphate + diphosphate. The protein operates within amino-acid biosynthesis; S-adenosyl-L-methionine biosynthesis; S-adenosyl-L-methionine from L-methionine: step 1/1. Its function is as follows. Catalyzes the formation of S-adenosylmethionine (AdoMet) from methionine and ATP. The overall synthetic reaction is composed of two sequential steps, AdoMet formation and the subsequent tripolyphosphate hydrolysis which occurs prior to release of AdoMet from the enzyme. The polypeptide is S-adenosylmethionine synthase (Borreliella afzelii (strain PKo) (Borrelia afzelii)).